A 484-amino-acid polypeptide reads, in one-letter code: Dual specificity protein kinase CLK1 (484 aa).

The segment at 1-42 is disordered; sequence MRHSKRTYCPDWDDKDWDYGKWRSSSSHKRRKRSHSSAQENK. The segment covering 26-35 has biased composition (basic residues); that stretch reads SSHKRRKRSH. Residue Ser61 is modified to Phosphoserine. The segment at 79-146 is disordered; the sequence is DYTQGCEPGH…RTRSVEDDEE (68 aa). Over residues 86–97 the composition is skewed to basic and acidic residues; the sequence is PGHRQRDHESRY. The segment covering 100 to 112 has biased composition (low complexity); that stretch reads HSSKSSGRSGRSS. A compositionally biased stretch (basic residues) spans 113-138; the sequence is YKSKHRIHHSTSHRRSHGKSHRRKRT. Thr138 carries the post-translational modification Phosphothreonine. At Ser140 the chain carries Phosphoserine. Residues 161–477 enclose the Protein kinase domain; the sequence is YEIVDTLGEG…LREALKHPFF (317 aa). ATP contacts are provided by residues 167–175 and Lys191; that span reads LGEGAFGKV. Asp288 functions as the Proton acceptor in the catalytic mechanism.

This sequence belongs to the protein kinase superfamily. CMGC Ser/Thr protein kinase family. Lammer subfamily. As to quaternary structure, interacts with PPIG and UBL5. Autophosphorylates on all three types of residues. Endothelial cells.

Its subcellular location is the nucleus. It carries out the reaction L-seryl-[protein] + ATP = O-phospho-L-seryl-[protein] + ADP + H(+). The enzyme catalyses L-threonyl-[protein] + ATP = O-phospho-L-threonyl-[protein] + ADP + H(+). It catalyses the reaction L-tyrosyl-[protein] + ATP = O-phospho-L-tyrosyl-[protein] + ADP + H(+). With respect to regulation, regulates splicing of its own pre-mRNA according to its kinase activity; increased expression of the catalytically active form influences splicing to generate the catalytically inactive splicing variant lacking the kinase domain. Leucettine L41 inhibits its kinase activity and affects the regulation of alternative splicing mediated by phosphorylation of SR proteins. Its function is as follows. Dual specificity kinase acting on both serine/threonine and tyrosine-containing substrates. Phosphorylates serine- and arginine-rich (SR) proteins of the spliceosomal complex and may be a constituent of a network of regulatory mechanisms that enable SR proteins to control RNA splicing. Phosphorylates: SRSF1, SRSF3 and PTPN1. Regulates the alternative splicing of tissue factor (F3) pre-mRNA in endothelial cells. The polypeptide is Dual specificity protein kinase CLK1 (Homo sapiens (Human)).